A 555-amino-acid chain; its full sequence is MFS-type transporter VdtG (555 aa).

Residues Met1–Pro20 are disordered. Residue Asn4 is glycosylated (N-linked (GlcNAc...) asparagine). Helical transmembrane passes span Thr30 to Leu50, Asp71 to Gly91, and Trp101 to Pro121. N-linked (GlcNAc...) asparagine glycosylation occurs at Asn122. 2 helical membrane passes run Ile132–Val152 and Gly162–Phe182. Asn185 carries N-linked (GlcNAc...) asparagine glycosylation. 4 consecutive transmembrane segments (helical) span residues Trp190 to Leu210, Leu232 to Gly252, Ile262 to Trp282, and Ala304 to Phe324. N-linked (GlcNAc...) asparagine glycosylation occurs at Asn329. 5 helical membrane passes run Val337 to Ile357, Thr364 to Phe384, Trp393 to Leu413, Pro425 to Val445, and Leu497 to Phe517. Residues Ala528 to Val555 are disordered. Gly residues predominate over residues Gly530–Val555.

It belongs to the major facilitator superfamily. TCR/Tet family.

Its subcellular location is the endoplasmic reticulum membrane. Its function is as follows. MFS-type transporter; part of the gene cluster that mediates the biosynthesis of viriditoxin, one of the 'classical' secondary metabolites produced by fungi and that has antibacterial activity. Is not essential for viriditoxin production. This is MFS-type transporter VdtG from Byssochlamys spectabilis (Paecilomyces variotii).